The following is an 89-amino-acid chain: MADVVASIRVMPDSADRDLNELMDALKAAVPAGTKFQKFELKPIAFGLKAIMATVTVDDSEGGTEPVEEAWSKVPGVESVNVEATGRAF.

It belongs to the EF-1-beta/EF-1-delta family.

Functionally, promotes the exchange of GDP for GTP in EF-1-alpha/GDP, thus allowing the regeneration of EF-1-alpha/GTP that could then be used to form the ternary complex EF-1-alpha/GTP/AAtRNA. The chain is Elongation factor 1-beta from Methanocella arvoryzae (strain DSM 22066 / NBRC 105507 / MRE50).